The sequence spans 106 residues: Antitoxin MazE3 (106 aa).

As to quaternary structure, forms a complex with cognate toxin MazF3, possibly with 1:1 stoichiometry.

Its function is as follows. Antitoxin component of a type II toxin-antitoxin (TA) system. Upon expression in E.coli and M.smegmatis neutralizes the effect of cognate toxin MazF3. Overexpression of MazE3 alone decreased persister cells formation in M.smegmatis upon challenge with gentamicin or kanamycin. The polypeptide is Antitoxin MazE3 (mazE3) (Mycobacterium tuberculosis (strain ATCC 25618 / H37Rv)).